The primary structure comprises 302 residues: L-threonate dehydrogenase (302 aa).

Residues 7–35 and Thr102 contribute to the NAD(+) site; that span reads FHVGIVGLGSMGMGAALSCVRAGLSTWGA. Lys178 is a catalytic residue. Residue Lys246 participates in NAD(+) binding.

The protein belongs to the HIBADH-related family. L-threonate dehydrogenase subfamily.

The enzyme catalyses L-threonate + NAD(+) = 2-dehydro-L-erythronate + NADH + H(+). In terms of biological role, catalyzes oxidation of L-threonate to 2-oxo-tetronate. Can use either NAD(+) or NADP(+) as cosubstrate, with a preference for NAD(+). This Escherichia coli O6:H1 (strain CFT073 / ATCC 700928 / UPEC) protein is L-threonate dehydrogenase.